The primary structure comprises 264 residues: Protein ADMETOS (264 aa).

In terms of tissue distribution, paternally imprinted expression in the endosperm.

In terms of biological role, product of a dosage-sensitive gene that contributes to the maintenance of paternally and maternally imprinted gene expression in the endosperm in order to balance parental contributions. Underlies postzygotic reproductive isolation by promoting triploid seed arrest in a genetic dosage-dependent manner, thus being a component of postzygotic interploidy hybridization barriers. The polypeptide is Protein ADMETOS (Arabidopsis thaliana (Mouse-ear cress)).